A 344-amino-acid chain; its full sequence is MSGEPELIELRELAPAGRAGKGRTRLERANALRIARGTACNPTRQLVPGRGHRFQPAGPATHTWCDLCGDFIWGVVRKGLQCARLSADCKFTCHYRCRALVCLDCCGPRDLGWEPAVERDTNVDEPVEWETPDLSQAEIEQKIKEYNAQINSNLFMSLNKDGSYTGFIKVQLKLVRPVSVPSSKKPPSLQDARRGPGRGTSVRRRTSFYLPKDAVKHLHVLSRTRAREVIEALLRKFLVVDDPRKFALFERAERHGQVYLRKLLDDEQPLRLRLLAGPSDKALSFVLKENDSGEVNWDAFSMPELHNFLRILQREEEEHLRQILQKYSYCRQKIQEALHACPLG.

Residue Ser2 is modified to N-acetylserine. Residue Ser2 is modified to Phosphoserine. Positions 2–119 (SGEPELIELR…DLGWEPAVER (118 aa)) are mediates interaction with E4F1. The residue at position 36 (Arg36) is an Omega-N-methylarginine. A Phorbol-ester/DAG-type zinc finger spans residues 51–105 (GHRFQPAGPATHTWCDLCGDFIWGVVRKGLQCARLSADCKFTCHYRCRALVCLDC). Residues 179–189 (SVPSSKKPPSL) show a composition bias toward low complexity. A disordered region spans residues 179-203 (SVPSSKKPPSLQDARRGPGRGTSVR). Residues 198–292 (RGTSVRRRTS…LSFVLKENDS (95 aa)) form the Ras-associating domain. Residues 294–341 (EVNWDAFSMPELHNFLRILQREEEEHLRQILQKYSYCRQKIQEALHAC) enclose the SARAH domain. Residues 315–318 (EEEE) form an MOAP1-binding region.

In terms of assembly, interacts with MAP1S. Interacts with XPA. Binds to the N-terminal of CDC20 during prometaphase. Binds to STK3/MST2 and STK4/MST1. Recruited to the TNFRSF1A and TNFRSF10A complexes in response to their respective cognate ligand, after internalization. Can self-associate. Part of a complex with MDM2, DAXX, RASSF1 and USP7. Interacts with ECM2. Interacts with MOAP1. Interacts with E4F1. Interacts with RSSF5 and probably associates with HRAS via a RSSF1 isoform A-RSSF5 heterodimer. Interacts (via C-terminus) with DAXX (via N-terminus); the interaction is independent of MDM2 and TP53. Interacts (via N-terminus) with MDM2 (via C-terminus); the interaction is independent of TP53. Interacts with RAB39A. Interacts with RAB39B; the interaction is weak. As to quaternary structure, interacts (via N-terminus) with DAXX. Interacts with RAB39B; the interaction is strong. Does not interact with RAB39A. In terms of assembly, interacts (via N-terminus) with DAXX. As to expression, isoform A and isoform C are ubiquitously expressed in all tissues tested, however isoform A is absent in many corresponding cancer cell lines. Isoform B is mainly expressed in hematopoietic cells.

It localises to the cytoplasm. It is found in the cytoskeleton. Its subcellular location is the microtubule organizing center. The protein localises to the centrosome. The protein resides in the spindle. It localises to the spindle pole. It is found in the nucleus. Potential tumor suppressor. Required for death receptor-dependent apoptosis. Mediates activation of STK3/MST2 and STK4/MST1 during Fas-induced apoptosis by preventing their dephosphorylation. When associated with MOAP1, promotes BAX conformational change and translocation to mitochondrial membranes in response to TNF and TNFSF10 stimulation. Isoform A interacts with CDC20, an activator of the anaphase-promoting complex, APC, resulting in the inhibition of APC activity and mitotic progression. Inhibits proliferation by negatively regulating cell cycle progression at the level of G1/S-phase transition by regulating accumulation of cyclin D1 protein. Isoform C has been shown not to perform these roles, no function has been identified for this isoform. Isoform A disrupts interactions among MDM2, DAXX and USP7, thus contributing to the efficient activation of TP53 by promoting MDM2 self-ubiquitination in cell-cycle checkpoint control in response to DNA damage. The protein is Ras association domain-containing protein 1 of Homo sapiens (Human).